Here is a 233-residue protein sequence, read N- to C-terminus: Small ribosomal subunit protein uS3 (233 aa).

Residues 39–107 form the KH type-2 domain; the sequence is IRTFLKRKLY…EVNINIKEER (69 aa). Positions 211–233 are disordered; the sequence is GVQPEKTEESAPAKKPRRARRGK. The segment covering 213 to 222 has biased composition (basic and acidic residues); it reads QPEKTEESAP. Residues 224-233 show a composition bias toward basic residues; sequence KKPRRARRGK.

It belongs to the universal ribosomal protein uS3 family. As to quaternary structure, part of the 30S ribosomal subunit. Forms a tight complex with proteins S10 and S14.

In terms of biological role, binds the lower part of the 30S subunit head. Binds mRNA in the 70S ribosome, positioning it for translation. The chain is Small ribosomal subunit protein uS3 from Campylobacter lari (strain RM2100 / D67 / ATCC BAA-1060).